The chain runs to 275 residues: Diaminopimelate epimerase (275 aa).

Positions 12, 45, and 65 each coordinate substrate. Cys-74 functions as the Proton donor in the catalytic mechanism. Residues 75 to 76, Asn-158, Asn-191, and 209 to 210 each bind substrate; these read GN and ER. Cys-218 functions as the Proton acceptor in the catalytic mechanism. 219-220 serves as a coordination point for substrate; sequence GS.

Belongs to the diaminopimelate epimerase family. In terms of assembly, homodimer.

It localises to the cytoplasm. The enzyme catalyses (2S,6S)-2,6-diaminopimelate = meso-2,6-diaminopimelate. It participates in amino-acid biosynthesis; L-lysine biosynthesis via DAP pathway; DL-2,6-diaminopimelate from LL-2,6-diaminopimelate: step 1/1. Its function is as follows. Catalyzes the stereoinversion of LL-2,6-diaminopimelate (L,L-DAP) to meso-diaminopimelate (meso-DAP), a precursor of L-lysine and an essential component of the bacterial peptidoglycan. This is Diaminopimelate epimerase from Shewanella amazonensis (strain ATCC BAA-1098 / SB2B).